We begin with the raw amino-acid sequence, 94 residues long: Integration host factor subunit beta (94 aa).

The protein belongs to the bacterial histone-like protein family. Heterodimer of an alpha and a beta chain.

In terms of biological role, this protein is one of the two subunits of integration host factor, a specific DNA-binding protein that functions in genetic recombination as well as in transcriptional and translational control. This Haemophilus influenzae (strain 86-028NP) protein is Integration host factor subunit beta.